The following is a 138-amino-acid chain: Eukaryotic translation initiation factor 1A (138 aa).

Over residues 1–15 (MPKNKGKGGKNRRRG) the composition is skewed to basic residues. A disordered region spans residues 1–28 (MPKNKGKGGKNRRRGKNENENEKRELTY). Residues 16-27 (KNENENEKRELT) show a composition bias toward basic and acidic residues. One can recognise an S1-like domain in the interval 22–96 (EKRELTYAEE…EKGDVILKYT (75 aa)).

It belongs to the eIF-1A family.

Its function is as follows. Seems to be required for maximal rate of protein biosynthesis. Enhances ribosome dissociation into subunits and stabilizes the binding of the initiator Met-tRNA(I) to 40 S ribosomal subunits. The chain is Eukaryotic translation initiation factor 1A (tif11) from Schizosaccharomyces pombe (strain 972 / ATCC 24843) (Fission yeast).